The sequence spans 373 residues: 3-dehydroquinate synthase (373 aa).

NAD(+) contacts are provided by residues 120–124, 144–145, Lys157, Lys166, and 184–187; these read GVVGD, TT, and FLKT. Positions 199, 262, and 278 each coordinate Zn(2+).

The protein belongs to the sugar phosphate cyclases superfamily. Dehydroquinate synthase family. The cofactor is NAD(+). Co(2+) serves as cofactor. Requires Zn(2+) as cofactor.

It is found in the cytoplasm. The enzyme catalyses 7-phospho-2-dehydro-3-deoxy-D-arabino-heptonate = 3-dehydroquinate + phosphate. It functions in the pathway metabolic intermediate biosynthesis; chorismate biosynthesis; chorismate from D-erythrose 4-phosphate and phosphoenolpyruvate: step 2/7. Its function is as follows. Catalyzes the conversion of 3-deoxy-D-arabino-heptulosonate 7-phosphate (DAHP) to dehydroquinate (DHQ). This Clostridium tetani (strain Massachusetts / E88) protein is 3-dehydroquinate synthase.